Here is a 265-residue protein sequence, read N- to C-terminus: Interleukin-1 alpha (265 aa).

Residues 1 to 108 (MAKVPDLFED…DTEEVIMKPR (108 aa)) constitute a propeptide that is removed on maturation. Lys78 is subject to N6-acetyllysine. Residues 78 to 82 (KKRRL) are nuclear localization signal (NLS). Residue Ser83 is modified to Phosphoserine. Residues Asn98 and Asn137 are each glycosylated (N-linked (GlcNAc...) asparagine).

Belongs to the IL-1 family. As to quaternary structure, monomer. Interacts with TMED10; the interaction mediates the translocation from the cytoplasm into the ERGIC (endoplasmic reticulum-Golgi intermediate compartment) and thereby secretion. Interacts with IL1R1. Interacts with S100A13; this interaction is the first step in the export of IL1A, followed by direct translocation of this complex across the plasma membrane. Acetylated within its nuclear localization sequence, which impacts subcellular localization. Post-translationally, proteolytic processed by CAPN1 in a calcium-dependent manner. Cleavage from 31 kDa precursor to 18 kDa biologically active molecules. In terms of processing, phosphorylated. Phosphorylation greatly enhances susceptibility to digestion and promotes the conversion of pre-IL1A alpha to the biologically active IL1A.

The protein localises to the nucleus. It localises to the cytoplasm. Its subcellular location is the secreted. Its function is as follows. Cytokine constitutively present intracellularly in nearly all resting non-hematopoietic cells that plays an important role in inflammation and bridges the innate and adaptive immune systems. After binding to its receptor IL1R1 together with its accessory protein IL1RAP, forms the high affinity interleukin-1 receptor complex. Signaling involves the recruitment of adapter molecules such as MYD88, IRAK1 or IRAK4. In turn, mediates the activation of NF-kappa-B and the three MAPK pathways p38, p42/p44 and JNK pathways. Within the cell, acts as an alarmin and cell death results in its liberation in the extracellular space after disruption of the cell membrane to induce inflammation and alert the host to injury or damage. In addition to its role as a danger signal, which occurs when the cytokine is passively released by cell necrosis, directly senses DNA damage and acts as signal for genotoxic stress without loss of cell integrity. This is Interleukin-1 alpha (IL1A) from Canis lupus familiaris (Dog).